The primary structure comprises 334 residues: Ornithine carbamoyltransferase (334 aa).

Carbamoyl phosphate-binding positions include 56 to 59 (STRT), Gln83, Arg107, and 134 to 137 (HPTQ). Residues Asn168, Asp232, and 236 to 237 (SM) each bind L-ornithine. Carbamoyl phosphate-binding positions include 274-275 (CL) and Arg320.

The protein belongs to the aspartate/ornithine carbamoyltransferase superfamily. OTCase family.

The protein localises to the cytoplasm. It catalyses the reaction carbamoyl phosphate + L-ornithine = L-citrulline + phosphate + H(+). It functions in the pathway amino-acid biosynthesis; L-arginine biosynthesis; L-arginine from L-ornithine and carbamoyl phosphate: step 1/3. Functionally, reversibly catalyzes the transfer of the carbamoyl group from carbamoyl phosphate (CP) to the N(epsilon) atom of ornithine (ORN) to produce L-citrulline. This is Ornithine carbamoyltransferase from Shigella dysenteriae serotype 1 (strain Sd197).